We begin with the raw amino-acid sequence, 357 residues long: DNA replication and repair protein RecF (357 aa).

30–37 provides a ligand contact to ATP; that stretch reads GANGSGKT.

It belongs to the RecF family.

Its subcellular location is the cytoplasm. Functionally, the RecF protein is involved in DNA metabolism; it is required for DNA replication and normal SOS inducibility. RecF binds preferentially to single-stranded, linear DNA. It also seems to bind ATP. In Shigella boydii serotype 4 (strain Sb227), this protein is DNA replication and repair protein RecF.